Reading from the N-terminus, the 264-residue chain is Thymidylate synthase (264 aa).

R21 lines the dUMP pocket. (6R)-5,10-methylene-5,6,7,8-tetrahydrofolate is bound at residue H51. 126-127 (RR) provides a ligand contact to dUMP. Residue C146 is the Nucleophile of the active site. Residues 166-169 (RSAD), N177, and 207-209 (HLY) each bind dUMP. D169 provides a ligand contact to (6R)-5,10-methylene-5,6,7,8-tetrahydrofolate. Position 263 (A263) interacts with (6R)-5,10-methylene-5,6,7,8-tetrahydrofolate.

Belongs to the thymidylate synthase family. Bacterial-type ThyA subfamily. In terms of assembly, homodimer.

The protein localises to the cytoplasm. The catalysed reaction is dUMP + (6R)-5,10-methylene-5,6,7,8-tetrahydrofolate = 7,8-dihydrofolate + dTMP. It participates in pyrimidine metabolism; dTTP biosynthesis. Its function is as follows. Catalyzes the reductive methylation of 2'-deoxyuridine-5'-monophosphate (dUMP) to 2'-deoxythymidine-5'-monophosphate (dTMP) while utilizing 5,10-methylenetetrahydrofolate (mTHF) as the methyl donor and reductant in the reaction, yielding dihydrofolate (DHF) as a by-product. This enzymatic reaction provides an intracellular de novo source of dTMP, an essential precursor for DNA biosynthesis. In Bartonella henselae (strain ATCC 49882 / DSM 28221 / CCUG 30454 / Houston 1) (Rochalimaea henselae), this protein is Thymidylate synthase.